The chain runs to 383 residues: MTAPAELSPTLQLACDLIRRPSVTPVDADCQAQMMKRLGAVGFQLEPMRIEDVDNFWATHGNQDGPVLCFAGHTDVVPTGPVQQWQHEPFEALIDADGMLCGRGAADMKGSLASMVVASERFVQDYPNHRGRVAFLITSDEEGPAHHGTKAVVERLIARNERLDWCIVGEPSSTTLLGDVVKNGRRGSLGAKLTVRGKQGHVAYPHLARNPIHLAAPALAELAAEHWDEGNAFFPPTSFQISNLNSGTGATNVVPGDLIAVFNFRFSTESTVEGLQARVSAILDKHELDWSIDWALSGLPFLTEPGELLDAVSASIKGVTGRDTQPSTSGGTSDGRFIATMGTQVVELGPVNATIHQVDERILASDLDLLTEIYYQTLVRLLA.

His-73 is a Zn(2+) binding site. Asp-75 is an active-site residue. Asp-107 is a binding site for Zn(2+). The active-site Proton acceptor is Glu-141. Glu-142, Glu-170, and His-356 together coordinate Zn(2+).

This sequence belongs to the peptidase M20A family. DapE subfamily. In terms of assembly, homodimer. The cofactor is Zn(2+). Co(2+) serves as cofactor.

It carries out the reaction N-succinyl-(2S,6S)-2,6-diaminopimelate + H2O = (2S,6S)-2,6-diaminopimelate + succinate. The protein operates within amino-acid biosynthesis; L-lysine biosynthesis via DAP pathway; LL-2,6-diaminopimelate from (S)-tetrahydrodipicolinate (succinylase route): step 3/3. Catalyzes the hydrolysis of N-succinyl-L,L-diaminopimelic acid (SDAP), forming succinate and LL-2,6-diaminopimelate (DAP), an intermediate involved in the bacterial biosynthesis of lysine and meso-diaminopimelic acid, an essential component of bacterial cell walls. This is Succinyl-diaminopimelate desuccinylase from Pseudomonas putida (strain W619).